The following is a 104-amino-acid chain: MAAKIKKGDKVVILAGRDKGKTGEVTKVLPTEDRVVVAGVNVVKRHTRATQTEQGGIIEKEASIHVSNVAVADPKTGEATRVGFKTEDGKKVRVAKSSGEVIDV.

This sequence belongs to the universal ribosomal protein uL24 family. In terms of assembly, part of the 50S ribosomal subunit.

One of two assembly initiator proteins, it binds directly to the 5'-end of the 23S rRNA, where it nucleates assembly of the 50S subunit. Functionally, one of the proteins that surrounds the polypeptide exit tunnel on the outside of the subunit. The polypeptide is Large ribosomal subunit protein uL24 (Maricaulis maris (strain MCS10) (Caulobacter maris)).